The chain runs to 517 residues: MQLNPAEISELIKSRIEGLTAGANIRNQGTVVSVTDGIVRIHGLSDVMQGEMLEFPADAEGQPSYGLALNLERDSVGAVILGAYEHISEGNTVKCTGRILEVPVGPELKGRVVNALGQPIDGKGPIDAKMTDVIEKVAPGVIARQSVSQPMQTGLKSIDSMVPVGRGQRELIIGDRQTGKTAVAIDAIINQKGQNMTCVYVAIGQKASSVKNVVRSLEQAGAMEYTIVVAATASESAAMQYVAAYSGCTMGEYFRDRGEDALIVYDDLSKQAVAYRQVSLLLRRPPGREAYPGDVFYLHSRLLERAARVNEKYVEDFTKGAVKGKTGSLTALPIIETQAGDVSAFVPTNVISITDGQIFLETSLFNAGIRPAINAGISVSRVGGAAQTKLIKNLSGGIRTDLAQYRELAAFAQFASDLDEATRKQLERGARVTELLKQAQYSPLPISLMGATLFAVNKGYLDDIAVNKLLSFEHGLHGYLKDKHAALLAKLEADKAMDKDAEAELNAATAAFKKSFA.

G174–T181 is an ATP binding site.

The protein belongs to the ATPase alpha/beta chains family. As to quaternary structure, F-type ATPases have 2 components, CF(1) - the catalytic core - and CF(0) - the membrane proton channel. CF(1) has five subunits: alpha(3), beta(3), gamma(1), delta(1), epsilon(1). CF(0) has three main subunits: a(1), b(2) and c(9-12). The alpha and beta chains form an alternating ring which encloses part of the gamma chain. CF(1) is attached to CF(0) by a central stalk formed by the gamma and epsilon chains, while a peripheral stalk is formed by the delta and b chains.

The protein resides in the cell inner membrane. The catalysed reaction is ATP + H2O + 4 H(+)(in) = ADP + phosphate + 5 H(+)(out). In terms of biological role, produces ATP from ADP in the presence of a proton gradient across the membrane. The alpha chain is a regulatory subunit. The protein is ATP synthase subunit alpha 1 of Albidiferax ferrireducens (strain ATCC BAA-621 / DSM 15236 / T118) (Rhodoferax ferrireducens).